Reading from the N-terminus, the 538-residue chain is MMEAVAVAAAVLLLLHVAARVADAVWWRPRRLEAHFAGQGVRGPPYRFLVGCVREMVALMAEATAKPMPPAAPHNALPRVLAFYHYWRKIYGPTFLIWFGPTPRLTVAEPEMVREIFLTRAEAFDRYEAHPVVRQLEGDGLVSLHGDKWAHHRRVLTPGFYPDNLNRLVPHVGRSVAALAERWRAMACAGGGEVEVDVAEWFQAVAEEAITRATFGRSYDSGRVVFRLQARLMAFASEAFRKVLVPGYRFLPTKKNRMSWGLDREIRRGLVRLIGRRSGGDGGEEDETTTELKDKQDSGFNDLLGLMINAGVDRTMPVEDMVEECKTFFFAGKQTTTNLLTWATVLLAMHPDWQDRARREVLAVCGDAAGELPTKDHLPKLKTLGMILNETLRLYPPAVATIRRAKFDVTLGGGGDGDAGGIHIPRDTELLVPIMAIHHDARLWGPDAAQFNPARFASGAARAAKHPLAFIPFGLGSRMCIGQSLAILEAKLTMAVLLQRFDLALSPTYVHAPTVLMLLHPQYGAPLIFRPRQSQPSN.

A helical transmembrane segment spans residues 5–27 (VAVAAAVLLLLHVAARVADAVWW). C480 provides a ligand contact to heme.

The protein belongs to the cytochrome P450 family. Heme serves as cofactor. As to expression, expressed in roots, shoot apex, leaf sheaths, leaf blades, internodes and panicles.

Its subcellular location is the membrane. Cytochrome P450 involved in brassinosteroids (BRs) inactivation and regulation of BRs homeostasis. Is a multifunctional and multisubstrate enzyme that controls the endogenous bioactive BR content both by direct inactivation of castasterone (CS) and by decreasing the levels of BR precursors. Catalyzes the oxidation of carbon 22 hydroxylated BR intermediates to produce C26 oxidized metabolites. This is Cytochrome P450 734A4 (CYP734A4) from Oryza sativa subsp. japonica (Rice).